Here is a 361-residue protein sequence, read N- to C-terminus: Molybdenum import ATP-binding protein ModC 1 (361 aa).

The ABC transporter domain maps to Met1–Asp237. Gly35 to Thr42 contributes to the ATP binding site. One can recognise a Mop domain in the interval Asp296 to Gly361.

The protein belongs to the ABC transporter superfamily. Molybdate importer (TC 3.A.1.8) family. In terms of assembly, the complex is composed of two ATP-binding proteins (ModC), two transmembrane proteins (ModB) and a solute-binding protein (ModA).

It localises to the cell inner membrane. It catalyses the reaction molybdate(out) + ATP + H2O = molybdate(in) + ADP + phosphate + H(+). In terms of biological role, part of the ABC transporter complex ModABC involved in molybdenum import. Responsible for energy coupling to the transport system. This chain is Molybdenum import ATP-binding protein ModC 1, found in Azotobacter vinelandii.